Reading from the N-terminus, the 316-residue chain is tRNA dimethylallyltransferase (316 aa).

23–30 (GPTASGKS) serves as a coordination point for ATP. Residue 25-30 (TASGKS) coordinates substrate. Residues 48–51 (DSMQ) are interaction with substrate tRNA.

It belongs to the IPP transferase family. Monomer. Requires Mg(2+) as cofactor.

The enzyme catalyses adenosine(37) in tRNA + dimethylallyl diphosphate = N(6)-dimethylallyladenosine(37) in tRNA + diphosphate. In terms of biological role, catalyzes the transfer of a dimethylallyl group onto the adenine at position 37 in tRNAs that read codons beginning with uridine, leading to the formation of N6-(dimethylallyl)adenosine (i(6)A). The protein is tRNA dimethylallyltransferase of Rhodopseudomonas palustris (strain BisB18).